The following is a 257-amino-acid chain: MPKRTGDILISTPVSKVRRRLNFDSPYTSRAAAPTVQGIKRRSWTYRPMYRKPRMYRMYRSPDVPPGCEGPCKVQSYEQRDDVKHTGVVRCVSDVTRGSGITHRVGKRFCIKSIYILGKIWMDENIKKQNHTNQVMFFLVRDRRPYGTSPMDFGQVFNMFDNEPSTATVKNDLRDRYQVMRKFHATVVGGPSGMKEQCLLKRFFKINTHVVYNHQEQAKYENHTENALLLYMACTHASNPVYATLKIRIYFYDAVTN.

It belongs to the geminiviridae capsid protein family.

It localises to the virion. In terms of biological role, encapsidates the viral DNA into characteristic twinned ('geminate') particles. Plays a role in protection of the genome from degradation, virus acquisition and transmission by insect vectors, infectivity, and systemic movement. This chain is Capsid protein, found in Capsicum annuum (Capsicum pepper).